A 438-amino-acid polypeptide reads, in one-letter code: 3-phosphoshikimate 1-carboxyvinyltransferase (438 aa).

Position 21 (K21) interacts with phosphoenolpyruvate. Positions 22 and 26 each coordinate 3-phosphoshikimate. The segment at 93-96 (NSGT) is phosphoenolpyruvate. 3 residues coordinate phosphoenolpyruvate: G95, T96, and R123. 5 residues coordinate 3-phosphoshikimate: S167, A168, Q169, D315, and K342. Phosphoenolpyruvate is bound at residue Q169. D315 acts as the Proton acceptor in catalysis. R346 and R387 together coordinate phosphoenolpyruvate.

This sequence belongs to the EPSP synthase family. As to quaternary structure, homodimer or homotetramer.

It localises to the cytoplasm. The enzyme catalyses 3-phosphoshikimate + phosphoenolpyruvate = 5-O-(1-carboxyvinyl)-3-phosphoshikimate + phosphate. Its pathway is metabolic intermediate biosynthesis; chorismate biosynthesis; chorismate from D-erythrose 4-phosphate and phosphoenolpyruvate: step 6/7. Functionally, catalyzes the transfer of the enolpyruvyl moiety of phosphoenolpyruvate (PEP) to the 5-hydroxyl of shikimate-3-phosphate (S3P) to produce enolpyruvyl shikimate-3-phosphate and inorganic phosphate. The sequence is that of 3-phosphoshikimate 1-carboxyvinyltransferase from Coxiella burnetii (strain RSA 493 / Nine Mile phase I).